A 156-amino-acid chain; its full sequence is RING finger protein 224 (156 aa).

The RING-type zinc finger occupies 23-70 (CIICYSAYDLSVHLPRRLYCGHTFCQACMQRLDMPAHEQHWIPCPQCR).

In Mus musculus (Mouse), this protein is RING finger protein 224 (Rnf224).